The following is a 438-amino-acid chain: 3-phosphoshikimate 1-carboxyvinyltransferase (438 aa).

3-phosphoshikimate-binding residues include K26, S27, and R31. K26 is a binding site for phosphoenolpyruvate. Residues G99 and R127 each contribute to the phosphoenolpyruvate site. Residues S172, Q174, D320, and K347 each coordinate 3-phosphoshikimate. Q174 contributes to the phosphoenolpyruvate binding site. Residue D320 is the Proton acceptor of the active site. The phosphoenolpyruvate site is built by R351 and R392.

This sequence belongs to the EPSP synthase family. Monomer.

It localises to the cytoplasm. It carries out the reaction 3-phosphoshikimate + phosphoenolpyruvate = 5-O-(1-carboxyvinyl)-3-phosphoshikimate + phosphate. Its pathway is metabolic intermediate biosynthesis; chorismate biosynthesis; chorismate from D-erythrose 4-phosphate and phosphoenolpyruvate: step 6/7. Functionally, catalyzes the transfer of the enolpyruvyl moiety of phosphoenolpyruvate (PEP) to the 5-hydroxyl of shikimate-3-phosphate (S3P) to produce enolpyruvyl shikimate-3-phosphate and inorganic phosphate. This Xanthomonas campestris pv. campestris (strain 8004) protein is 3-phosphoshikimate 1-carboxyvinyltransferase.